The following is a 380-amino-acid chain: Heme A synthase (380 aa).

8 helical membrane passes run 36-56, 125-145, 151-171, 187-207, 227-247, 287-307, 320-340, and 344-364; these read IRAWLAVLFALVVAMIVVGGL, VIGLVWALGFFGFLLARKIPA, LILPGVLGGVQGAVGAWMVAS, LATHLGLAFVILGLLAWSILQ, FGLATGWLHLAFLQILIGALV, LVQFIHRIVGYLLLAYGVMVW, FAFNAGFAALSLQVVLGIVTV, and APWQIAILHQLLAVGVFVLIL. A heme-binding site is contributed by histidine 292. Histidine 352 provides a ligand contact to heme.

This sequence belongs to the COX15/CtaA family. Type 2 subfamily. In terms of assembly, interacts with CtaB. The cofactor is heme b.

It localises to the cell membrane. It carries out the reaction Fe(II)-heme o + 2 A + H2O = Fe(II)-heme a + 2 AH2. Its pathway is porphyrin-containing compound metabolism; heme A biosynthesis; heme A from heme O: step 1/1. In terms of biological role, catalyzes the conversion of heme O to heme A by two successive hydroxylations of the methyl group at C8. The first hydroxylation forms heme I, the second hydroxylation results in an unstable dihydroxymethyl group, which spontaneously dehydrates, resulting in the formyl group of heme A. This is Heme A synthase from Ruegeria pomeroyi (strain ATCC 700808 / DSM 15171 / DSS-3) (Silicibacter pomeroyi).